Consider the following 482-residue polypeptide: MKFEEKCGDNGSIVGRNQSYPGEKHQPKGKPIANGEAEVYAKQEANGKCSTPRKSLSMYTWLEIQRHNHEADQLVINCKVYNVSSWADRHPGGHQVLNHCAGEDAMDVFRAMHPELDIVQLYLKPLLIGELAPGEPSQERHKNSQLVKDFQELWSIAEAMNMFHANLGFFFLHFVQILILEVLAWLIVYHFGSGWPVTMFISFLLTISQASSSFLQHDAGHLSIFRKSKWNHVVHKFVMCHLKGLSADRWNYWHFEQHVKPNIYPKDPDIDTDPLFLLGDSQPVKYGKKKIKYINYEEQHLYFYKVWLPLFMPVYLKLPSMQAMYLQRYWVCFSLQDITWVSSFYIYFITFGLYYGIFGTMLLIYLVKFLESPWIVYVTQMSHITMRMSTEENRDWLTTQVLATCNTESFFNDFTGHLNFQIEHHLFPTMPRHNYHKVAPLVRSLCAKHGLHYVNKPMLRAFGDIVRALKKSAALWADAYYE.

Residues Met1–Pro31 form a disordered region. The Cytoplasmic portion of the chain corresponds to Met1 to Leu167. The 77-residue stretch at Leu56–Ala132 folds into the Cytochrome b5 heme-binding domain. Heme is bound by residues His90 and His113. The chain crosses the membrane as a helical span at residues Gly168 to Val188. Over Tyr189–His190 the chain is Lumenal. A helical membrane pass occupies residues Phe191 to Ser211. Over Ser212 to Lys305 the chain is Cytoplasmic. Residues His217–His221 carry the Histidine box-1 motif. The Histidine box-2 signature appears at His254–His258. The helical transmembrane segment at Val306 to Leu326 threads the bilayer. The Lumenal portion of the chain corresponds to Gln327–Ser343. Residues Phe344–Ile364 form a helical membrane-spanning segment. At Tyr365–Glu482 the chain is on the cytoplasmic side. A Histidine box-3 motif is present at residues Gln421 to His425.

The protein belongs to the fatty acid desaturase type 1 family.

The protein localises to the endoplasmic reticulum membrane. It participates in lipid metabolism; polyunsaturated fatty acid biosynthesis. The chain is Putative fatty acid desaturase 2-like protein FADS2B from Homo sapiens (Human).